A 721-amino-acid chain; its full sequence is Zinc-transporting ATPase (721 aa).

At 1-107 the chain is on the cytoplasmic side; sequence MTQSSPLKTQ…HSHGAGEFNL (107 aa). The region spanning 8–74 is the HMA domain; sequence KTQQMQVGGM…RIAALGYTLA (67 aa). Residues cysteine 19 and cysteine 22 each contribute to the Zn(2+) site. Positions 80-101 are disordered; sequence VTLNGHKHPHSHREEGHSHSHG. The chain crosses the membrane as a helical span at residues 108–128; sequence KQELLPVLTAIALFTIAILFE. Residues 129-140 are Extracellular-facing; sequence QPLHNTPGQIAE. Residues 141 to 160 form a helical membrane-spanning segment; sequence FAVIIPAYLLSGWTVLKTAG. At 161-167 the chain is on the cytoplasmic side; sequence RNILRGQ. Residues 168–187 traverse the membrane as a helical segment; sequence IFDENFLMTIATLGALAIHQ. The Extracellular segment spans residues 188-190; that stretch reads LPE. The chain crosses the membrane as a helical span at residues 191–210; the sequence is AVAVMLFFRVGELFQEYSVG. Topologically, residues 211–344 are cytoplasmic; that stretch reads RSRRSIKALL…ITQFARYYTP (134 aa). The helical transmembrane segment at 345 to 363 threads the bilayer; it reads VIVFLSLAVALLPPLFIPG. Topologically, residues 364 to 369 are extracellular; it reads ADRADW. The helical transmembrane segment at 370–387 threads the bilayer; the sequence is VYRALVLLVISCPCGLVI. The Cytoplasmic portion of the chain corresponds to 388 to 671; it reads SIPLGYFGGI…AIHVARKTRQ (284 aa). Catalysis depends on aspartate 425, which acts as the 4-aspartylphosphate intermediate. Residues aspartate 618 and aspartate 622 each coordinate Mg(2+). Residues 672–693 traverse the membrane as a helical segment; it reads IVVQNIVLALGIKALFIALGTI. Residues 694–701 are Extracellular-facing; that stretch reads GLATLWEA. Residues 702-717 form a helical membrane-spanning segment; sequence VFADVGVALLAILNAT. The Cytoplasmic portion of the chain corresponds to 718–721; it reads RIAK.

Belongs to the cation transport ATPase (P-type) (TC 3.A.3) family. Type IB subfamily.

The protein localises to the cell membrane. It carries out the reaction Zn(2+)(in) + ATP + H2O = Zn(2+)(out) + ADP + phosphate + H(+). The protein is Zinc-transporting ATPase (ziaA) of Synechocystis sp. (strain ATCC 27184 / PCC 6803 / Kazusa).